Reading from the N-terminus, the 239-residue chain is Uridylate kinase (239 aa).

10-13 is an ATP binding site; sequence KLSG. Gly52 contributes to the UMP binding site. Residues Gly53 and Arg57 each coordinate ATP. UMP contacts are provided by residues Asp72 and 133-140; that span reads TGNPFFTT. 3 residues coordinate ATP: Thr160, Tyr166, and Asp169.

The protein belongs to the UMP kinase family. Homohexamer.

Its subcellular location is the cytoplasm. It carries out the reaction UMP + ATP = UDP + ADP. The protein operates within pyrimidine metabolism; CTP biosynthesis via de novo pathway; UDP from UMP (UMPK route): step 1/1. With respect to regulation, inhibited by UTP. Catalyzes the reversible phosphorylation of UMP to UDP. This Porphyromonas gingivalis (strain ATCC BAA-308 / W83) protein is Uridylate kinase.